The chain runs to 219 residues: Ribose-5-phosphate isomerase A (219 aa).

Substrate-binding positions include 28–31 (SGST), 81–84 (DGAD), and 94–97 (KGGG). Glu-103 functions as the Proton acceptor in the catalytic mechanism. Lys-121 is a substrate binding site.

This sequence belongs to the ribose 5-phosphate isomerase family. In terms of assembly, homodimer.

It catalyses the reaction aldehydo-D-ribose 5-phosphate = D-ribulose 5-phosphate. The protein operates within carbohydrate degradation; pentose phosphate pathway; D-ribose 5-phosphate from D-ribulose 5-phosphate (non-oxidative stage): step 1/1. In terms of biological role, catalyzes the reversible conversion of ribose-5-phosphate to ribulose 5-phosphate. In Haemophilus influenzae (strain ATCC 51907 / DSM 11121 / KW20 / Rd), this protein is Ribose-5-phosphate isomerase A.